A 240-amino-acid polypeptide reads, in one-letter code: Ribonuclease PH (240 aa).

Phosphate-binding positions include R86 and 124–126 (GTR).

Belongs to the RNase PH family. As to quaternary structure, homohexameric ring arranged as a trimer of dimers.

The enzyme catalyses tRNA(n+1) + phosphate = tRNA(n) + a ribonucleoside 5'-diphosphate. Phosphorolytic 3'-5' exoribonuclease that plays an important role in tRNA 3'-end maturation. Removes nucleotide residues following the 3'-CCA terminus of tRNAs; can also add nucleotides to the ends of RNA molecules by using nucleoside diphosphates as substrates, but this may not be physiologically important. Probably plays a role in initiation of 16S rRNA degradation (leading to ribosome degradation) during starvation. The chain is Ribonuclease PH from Mannheimia succiniciproducens (strain KCTC 0769BP / MBEL55E).